Here is a 211-residue protein sequence, read N- to C-terminus: ATP phosphoribosyltransferase (211 aa).

Belongs to the ATP phosphoribosyltransferase family. Short subfamily. In terms of assembly, heteromultimer composed of HisG and HisZ subunits.

Its subcellular location is the cytoplasm. The enzyme catalyses 1-(5-phospho-beta-D-ribosyl)-ATP + diphosphate = 5-phospho-alpha-D-ribose 1-diphosphate + ATP. The protein operates within amino-acid biosynthesis; L-histidine biosynthesis; L-histidine from 5-phospho-alpha-D-ribose 1-diphosphate: step 1/9. Its function is as follows. Catalyzes the condensation of ATP and 5-phosphoribose 1-diphosphate to form N'-(5'-phosphoribosyl)-ATP (PR-ATP). Has a crucial role in the pathway because the rate of histidine biosynthesis seems to be controlled primarily by regulation of HisG enzymatic activity. This is ATP phosphoribosyltransferase from Pseudomonas syringae pv. syringae (strain B728a).